The sequence spans 417 residues: Vacuolar cation/proton exchanger 3 (417 aa).

Residues 1–45 (MENPQIEMGAFKANGPQLQNGGLRSSMVQSWNLQRFVESALRSIR) lie on the Cytoplasmic side of the membrane. Residues 46 to 66 (IVIFTSKLNLLLPFGPASIIL) traverse the membrane as a helical segment. Residues 67 to 73 (HYTTSRH) are Extracellular-facing. Residues 74–94 (GLVFLFSMLGITPLAERLGYA) form a helical membrane-spanning segment. Topologically, residues 95–105 (TEQLAIYTGPT) are cytoplasmic. The helical transmembrane segment at 106–126 (VGGLLNATFGNATEMIIAIYA) threads the bilayer. The tract at residues 115 to 150 (GNATEMIIAIYALKNGMIRVVQQSLLGSILSNMLLV) is cation selection. At 127-140 (LKNGMIRVVQQSLL) the chain is on the extracellular side. Residues 141 to 161 (GSILSNMLLVMGCAFFAGGIV) traverse the membrane as a helical segment. The Cytoplasmic segment spans residues 162-173 (HRNKDQVFSKAT). A helical membrane pass occupies residues 174–194 (AVVNSGLLLMAVMGLMFPAVL). Residues 195 to 207 (HFTHSEVRQGASE) are Extracellular-facing. The chain crosses the membrane as a helical span at residues 208-230 (VSLSRFSSCIMLVAYASYLYFQL). Over 231–258 (SGRNNAYSPIGSEEMPNEDAAEEDEESE) the chain is Cytoplasmic. Residues 259-279 (IGMWESIAWLAMLTLWVSILS) traverse the membrane as a helical segment. Residues 280 to 291 (EYLVNAIEGASD) lie on the Extracellular side of the membrane. The helical transmembrane segment at 292–312 (SLNLPVAFISVILLPIVGNAA) threads the bilayer. The tract at residues 309-344 (GNAAEHASAIMFAMKDKLDITLGVAIGSSTQISMFV) is cation selection. The Cytoplasmic segment spans residues 313-330 (EHASAIMFAMKDKLDITL). Residues 331–351 (GVAIGSSTQISMFVIPFCVVI) form a helical membrane-spanning segment. The Extracellular segment spans residues 352 to 360 (GWMMGQKMD). Residues 361 to 381 (LNFQLFETATLFITVLVVAFM) traverse the membrane as a helical segment. Residues 382 to 389 (LQDGVANY) lie on the Cytoplasmic side of the membrane. A helical membrane pass occupies residues 390 to 410 (LKGLMLILCYLIVAASFFVHV). Over 411 to 417 (DPQSSDD) the chain is Extracellular.

It belongs to the Ca(2+):cation antiporter (CaCA) (TC 2.A.19) family. Cation/proton exchanger (CAX) subfamily. As to expression, ubiquitous.

Its subcellular location is the vacuole membrane. Vacuolar cation/proton exchanger (CAX). Translocates Ca(2+) and other metal ions into vacuoles using the proton gradient formed by H(+)-ATPase and H(+)-pyrophosphatase. In Oryza sativa subsp. japonica (Rice), this protein is Vacuolar cation/proton exchanger 3 (CAX3).